The sequence spans 625 residues: Thioredoxin domain-containing protein 6 (625 aa).

The tract at residues 158 to 302 (KSYTVAIIKP…FFFPNFKISN (145 aa)) is NDK. Residues 594–625 (GETPETSASDISRNAAAQGDDPEQDESKEMEE) form a disordered region. Over residues 613 to 625 (DDPEQDESKEMEE) the composition is skewed to acidic residues.

It belongs to the NDK family. Monomer and homodimer.

The protein localises to the cytoplasm. The protein resides in the cytoskeleton. Its subcellular location is the cilium axoneme. It localises to the dynein axonemal particle. In terms of biological role, may be a regulator of microtubule physiology. This chain is Thioredoxin domain-containing protein 6, found in Xenopus laevis (African clawed frog).